We begin with the raw amino-acid sequence, 110 residues long: ATP-dependent Clp protease adapter protein ClpS (110 aa).

Residues 1–10 are compositionally biased toward basic and acidic residues; it reads MSDDRRRGDE. The segment at 1–27 is disordered; it reads MSDDRRRGDEDGGAGTGVITKTKPKTK.

Belongs to the ClpS family. As to quaternary structure, binds to the N-terminal domain of the chaperone ClpA.

Involved in the modulation of the specificity of the ClpAP-mediated ATP-dependent protein degradation. The polypeptide is ATP-dependent Clp protease adapter protein ClpS (Parvibaculum lavamentivorans (strain DS-1 / DSM 13023 / NCIMB 13966)).